A 380-amino-acid chain; its full sequence is DNA primase small subunit PriS (380 aa).

Active-site residues include Asp101, Asp103, and Asp282.

It belongs to the eukaryotic-type primase small subunit family. In terms of assembly, heterodimer of a small subunit (PriS) and a large subunit (PriL). Requires Mg(2+) as cofactor. It depends on Mn(2+) as a cofactor.

Catalytic subunit of DNA primase, an RNA polymerase that catalyzes the synthesis of short RNA molecules used as primers for DNA polymerase during DNA replication. The small subunit contains the primase catalytic core and has DNA synthesis activity on its own. Binding to the large subunit stabilizes and modulates the activity, increasing the rate of DNA synthesis while decreasing the length of the DNA fragments, and conferring RNA synthesis capability. The DNA polymerase activity may enable DNA primase to also catalyze primer extension after primer synthesis. May also play a role in DNA repair. The sequence is that of DNA primase small subunit PriS from Hyperthermus butylicus (strain DSM 5456 / JCM 9403 / PLM1-5).